A 424-amino-acid polypeptide reads, in one-letter code: Histidine--tRNA ligase (424 aa).

Belongs to the class-II aminoacyl-tRNA synthetase family. Homodimer.

The protein localises to the cytoplasm. The catalysed reaction is tRNA(His) + L-histidine + ATP = L-histidyl-tRNA(His) + AMP + diphosphate + H(+). The protein is Histidine--tRNA ligase of Escherichia coli O17:K52:H18 (strain UMN026 / ExPEC).